Reading from the N-terminus, the 458-residue chain is Glycine--tRNA ligase (458 aa).

Positions 97 and 171 each coordinate substrate. Residues 203–205 (RNE), 213–218 (FRTREF), 287–288 (EL), and 331–334 (GADR) each bind ATP. A substrate-binding site is contributed by 218-222 (FEQME). 327–331 (EPSLG) serves as a coordination point for substrate.

The protein belongs to the class-II aminoacyl-tRNA synthetase family. In terms of assembly, homodimer.

It localises to the cytoplasm. The catalysed reaction is tRNA(Gly) + glycine + ATP = glycyl-tRNA(Gly) + AMP + diphosphate. Its function is as follows. Catalyzes the attachment of glycine to tRNA(Gly). This Bacillus anthracis protein is Glycine--tRNA ligase.